The sequence spans 305 residues: Glutaminase (305 aa).

Ser61, Asn113, Glu158, Asn165, Tyr189, Tyr241, and Val259 together coordinate substrate.

The protein belongs to the glutaminase family. Homotetramer.

The enzyme catalyses L-glutamine + H2O = L-glutamate + NH4(+). This chain is Glutaminase, found in Alkaliphilus metalliredigens (strain QYMF).